A 240-amino-acid polypeptide reads, in one-letter code: Sialidase 85-1.2 (240 aa).

A compositionally biased stretch (acidic residues) spans 127 to 142 (DDDDGGDDDDEEDSQE). Disordered stretches follow at residues 127–158 (DDDD…GKKP) and 221–240 (HRGG…QRDA). The segment covering 144 to 155 (SSPKESSPEKIG) has biased composition (basic and acidic residues).

This sequence belongs to the glycosyl hydrolase 33 family.

It catalyses the reaction Hydrolysis of alpha-(2-&gt;3)-, alpha-(2-&gt;6)-, alpha-(2-&gt;8)- glycosidic linkages of terminal sialic acid residues in oligosaccharides, glycoproteins, glycolipids, colominic acid and synthetic substrates.. Functionally, developmentally regulated neuraminidase implicated in parasite invasion of cells. May contribute to the pathology during T.cruzi infection by cleaving sialic acid from cells of the immune system. The polypeptide is Sialidase 85-1.2 (SA85-1.2) (Trypanosoma cruzi).